The primary structure comprises 686 residues: Chromatin modification-related protein EAF1 (686 aa).

The disordered stretch occupies residues 71–97; it reads QMKRRQNDHHNQGPPPKVQKSTVDSLK. The HSA domain maps to 202–280; that stretch reads FKFIRKSKKK…DKSIIRNLPV (79 aa). Residues 354 to 418 enclose the Myb-like domain; that stretch reads IPTIWLPEDD…FERYIQLNDK (65 aa). Disordered stretches follow at residues 493–517, 544–617, and 657–686; these read RKST…RIPT, ARMV…QQRR, and QQGY…PNNA. A compositionally biased stretch (polar residues) spans 497-506; sequence AELQANQNVT. Residues 554-568 show a composition bias toward pro residues; sequence APAPAPAPPPPPPPK. Polar residues predominate over residues 574–588; it reads TTPNGTPLTNEQIQH. Positions 599-613 are enriched in low complexity; that stretch reads LQQQQQQQQQQQHQQ. Residues 671-686 are compositionally biased toward polar residues; the sequence is QKNQTASPMSGSPNNA.

This sequence belongs to the EAF1 family. In terms of assembly, component of the NuA4 histone acetyltransferase complex.

It localises to the nucleus. Component of the NuA4 histone acetyltransferase complex which is involved in transcriptional activation of selected genes principally by acetylation of nucleosomal histone H4 and H2A. The NuA4 complex is also involved in DNA repair. This Candida albicans (strain SC5314 / ATCC MYA-2876) (Yeast) protein is Chromatin modification-related protein EAF1 (VID21).